A 451-amino-acid chain; its full sequence is UDP-N-acetylmuramate--L-alanine ligase (451 aa).

110–116 contacts ATP; the sequence is GTHGKTT.

This sequence belongs to the MurCDEF family.

It localises to the cytoplasm. It carries out the reaction UDP-N-acetyl-alpha-D-muramate + L-alanine + ATP = UDP-N-acetyl-alpha-D-muramoyl-L-alanine + ADP + phosphate + H(+). It functions in the pathway cell wall biogenesis; peptidoglycan biosynthesis. Functionally, cell wall formation. The sequence is that of UDP-N-acetylmuramate--L-alanine ligase from Francisella tularensis subsp. tularensis (strain WY96-3418).